The following is a 1119-amino-acid chain: Nuclear matrix constituent protein 1 (1119 aa).

Coiled-coil stretches lie at residues 140–226 (LAEL…LYQQ) and 328–488 (LQNR…LDER). 4 disordered regions span residues 846 to 884 (LDVE…AEEA), 903 to 974 (LASA…PTGR), 989 to 1015 (NGAL…EIPD), and 1046 to 1109 (GINA…EVSM). 2 stretches are compositionally biased toward basic residues: residues 859–876 (GNRK…RKRS) and 920–929 (KRTRNSRKRN). Residues 1075 to 1085 (TPEQSRGYQNQ) show a composition bias toward polar residues.

The protein belongs to the CRWN family.

Its subcellular location is the nucleus matrix. It is found in the nucleus lamina. Architectural component of nuclear structure that plays different roles in controlling nuclear size and morphology. This is Nuclear matrix constituent protein 1 from Daucus carota subsp. sativus (Carrot).